The chain runs to 96 residues: Co-chaperonin GroES (96 aa).

This sequence belongs to the GroES chaperonin family. In terms of assembly, heptamer of 7 subunits arranged in a ring. Interacts with the chaperonin GroEL.

The protein resides in the cytoplasm. In terms of biological role, together with the chaperonin GroEL, plays an essential role in assisting protein folding. The GroEL-GroES system forms a nano-cage that allows encapsulation of the non-native substrate proteins and provides a physical environment optimized to promote and accelerate protein folding. GroES binds to the apical surface of the GroEL ring, thereby capping the opening of the GroEL channel. The polypeptide is Co-chaperonin GroES (Leptospira borgpetersenii serovar Hardjo-bovis (strain JB197)).